A 1373-amino-acid chain; its full sequence is DNA-directed RNA polymerase subunit beta (1373 aa).

It belongs to the RNA polymerase beta chain family. The RNAP catalytic core consists of 2 alpha, 1 beta, 1 beta' and 1 omega subunit. When a sigma factor is associated with the core the holoenzyme is formed, which can initiate transcription.

It carries out the reaction RNA(n) + a ribonucleoside 5'-triphosphate = RNA(n+1) + diphosphate. DNA-dependent RNA polymerase catalyzes the transcription of DNA into RNA using the four ribonucleoside triphosphates as substrates. The sequence is that of DNA-directed RNA polymerase subunit beta from Rhodopseudomonas palustris (strain BisB18).